Here is a 173-residue protein sequence, read N- to C-terminus: ATP synthase subunit b (173 aa).

Residues 19-39 traverse the membrane as a helical segment; that stretch reads IVWSLIILVIVAVFFYKFFMP.

The protein belongs to the ATPase B chain family. In terms of assembly, F-type ATPases have 2 components, F(1) - the catalytic core - and F(0) - the membrane proton channel. F(1) has five subunits: alpha(3), beta(3), gamma(1), delta(1), epsilon(1). F(0) has three main subunits: a(1), b(2) and c(10-14). The alpha and beta chains form an alternating ring which encloses part of the gamma chain. F(1) is attached to F(0) by a central stalk formed by the gamma and epsilon chains, while a peripheral stalk is formed by the delta and b chains.

It localises to the cell membrane. Functionally, f(1)F(0) ATP synthase produces ATP from ADP in the presence of a proton or sodium gradient. F-type ATPases consist of two structural domains, F(1) containing the extramembraneous catalytic core and F(0) containing the membrane proton channel, linked together by a central stalk and a peripheral stalk. During catalysis, ATP synthesis in the catalytic domain of F(1) is coupled via a rotary mechanism of the central stalk subunits to proton translocation. In terms of biological role, component of the F(0) channel, it forms part of the peripheral stalk, linking F(1) to F(0). This Bifidobacterium longum (strain NCC 2705) protein is ATP synthase subunit b.